Reading from the N-terminus, the 196-residue chain is uncharacterized protein (196 aa).

It localises to the mitochondrion. This is an uncharacterized protein from Paramecium tetraurelia.